The sequence spans 88 residues: UPF0473 protein CLL_A1177 (88 aa).

Belongs to the UPF0473 family.

The chain is UPF0473 protein CLL_A1177 from Clostridium botulinum (strain Eklund 17B / Type B).